Here is a 433-residue protein sequence, read N- to C-terminus: MSSSVDFVTEQGRCGDDGNGAGETVKNGEIDHLLSEPSAPTISLPTESFLRAATLLKNQVVEATWKGGVEALASGSGPVLDPTVYTGLLGTAFTCLKSYEVTRNHQDLLTCAEIIDTCANVARATTRHVTFLCGRGGVCTLGAIVANYRGDQSKRDFFLGLFLELAEERELPAGPEEGGFGMSYDLLYGRAGFLWAALFLNRYLGQGTVPDHLLSPIVAAILAGGRVGAADHEACPLLYRFHGTRFWGAANGLAGILYVLLHFPLSEEDVKDVQGTLRYMMSNRFPNSGNYPCSEGNPRDKLVQWAHGATGMAITLAKASQVFPKERDFREAAIEAGEVVWKSGLVKKVGLADGVAGNAYAFLSLYRLTGDVVYEERAKAFASYLCRDAIELVNMTSQETEHDYSLFRGLAGPVCLWFDLVSPVDSKFPGYEI.

The segment at 1–22 (MSSSVDFVTEQGRCGDDGNGAG) is disordered.

It belongs to the LanC-like protein family.

Its function is as follows. May play a role in signaling. May be not involved in abscisic acid (ABA) signaling. This is LanC-like protein GCL1 (GCL1) from Arabidopsis thaliana (Mouse-ear cress).